Consider the following 292-residue polypeptide: ATP synthase gamma chain (292 aa).

The protein belongs to the ATPase gamma chain family. F-type ATPases have 2 components, CF(1) - the catalytic core - and CF(0) - the membrane proton channel. CF(1) has five subunits: alpha(3), beta(3), gamma(1), delta(1), epsilon(1). CF(0) has three main subunits: a, b and c.

It is found in the cell membrane. Produces ATP from ADP in the presence of a proton gradient across the membrane. The gamma chain is believed to be important in regulating ATPase activity and the flow of protons through the CF(0) complex. This is ATP synthase gamma chain from Streptococcus pneumoniae serotype 2 (strain D39 / NCTC 7466).